The sequence spans 269 residues: Glutamate 5-kinase 2 (269 aa).

Position 16 (Lys-16) interacts with ATP. Substrate contacts are provided by Ser-57, Asp-144, and Asn-156. 218–224 contributes to the ATP binding site; the sequence is SGGMISK.

This sequence belongs to the glutamate 5-kinase family.

It is found in the cytoplasm. The enzyme catalyses L-glutamate + ATP = L-glutamyl 5-phosphate + ADP. The protein operates within amino-acid biosynthesis; L-proline biosynthesis; L-glutamate 5-semialdehyde from L-glutamate: step 1/2. Functionally, catalyzes the transfer of a phosphate group to glutamate to form L-glutamate 5-phosphate. The protein is Glutamate 5-kinase 2 of Rhizobium meliloti (strain 1021) (Ensifer meliloti).